The sequence spans 228 residues: MAAAAAAKIAPSMLSSDFANLAAEADRMVRLGADWLHMDIMDGHFVPNLTIGAPVIQSLRKHTKAYLDCHLMVTNPSDYVEPLAKAGASGFTFHIEVSRDNWQELIQSIKAKGMRPGVSLRPGTPVEEVFPLVEAENPVELVLVMTVEPGFGGQKFMPEMMEKVRALRKKYPSLDIEVDGGLGPSTIDVAASAGANCIVAGSSIFGAAEPGEVISALRKSVEGSQNKS.

Serine 12 contacts substrate. 3 residues coordinate a divalent metal cation: histidine 37, aspartate 39, and histidine 70. Aspartate 39 acts as the Proton acceptor in catalysis. Substrate contacts are provided by residues histidine 70, 150–153 (GFGG), 179–181 (DGG), and 201–202 (GS). Residue aspartate 179 coordinates a divalent metal cation. Catalysis depends on aspartate 179, which acts as the Proton donor.

The protein belongs to the ribulose-phosphate 3-epimerase family. Homodimer. It depends on Co(2+) as a cofactor. Requires Fe(2+) as cofactor. Mn(2+) is required as a cofactor. Zn(2+) serves as cofactor. Predominantly accumulates in roots and seedlings.

The protein localises to the cytoplasm. It carries out the reaction D-ribulose 5-phosphate = D-xylulose 5-phosphate. The protein operates within carbohydrate degradation; pentose phosphate pathway; D-xylulose 5-phosphate from D-ribulose 5-phosphate (non-oxidative stage): step 1/1. In terms of biological role, catalyzes the reversible epimerization of D-ribulose 5-phosphate to D-xylulose 5-phosphate. This Oryza sativa subsp. japonica (Rice) protein is Ribulose-phosphate 3-epimerase, cytoplasmic isoform.